A 286-amino-acid polypeptide reads, in one-letter code: MSIQFNQVSYIYQQGTPYEFEAIKNVSLTLEQGKYYAIIGQTGSGKSTLIQHLNALLKPTTGSVNINGLEVTNKTKDKHLRHIRKEVGIVFQFPESQLFEDSVEKEIEFGPKNFNMNLKNVKDKAFQLLLELGFSRNVMSSSPFQMSGGQMRKIAIVSILAMDPQVIILDEPTAGLDPNSKHQVMSLIKKIQIEENKTIILVSHDMDDVARYSDEVVVMNKGTIVEKSNPRNLFNQKTQLLKWHIELPKVVKLQKDIEKKYNMLFPKLAMNEEEFVKLYKEWHHEE.

One can recognise an ABC transporter domain in the interval 3–246 (IQFNQVSYIY…KTQLLKWHIE (244 aa)). An ATP-binding site is contributed by 40–47 (GQTGSGKS).

This sequence belongs to the ABC transporter superfamily. Energy-coupling factor EcfA family. In terms of assembly, forms a stable energy-coupling factor (ECF) transporter complex composed of 2 membrane-embedded substrate-binding proteins (S component), 2 ATP-binding proteins (A component) and 2 transmembrane proteins (T component).

The protein localises to the cell membrane. In terms of biological role, ATP-binding (A) component of a common energy-coupling factor (ECF) ABC-transporter complex. Unlike classic ABC transporters this ECF transporter provides the energy necessary to transport a number of different substrates. The sequence is that of Energy-coupling factor transporter ATP-binding protein EcfA2 from Staphylococcus epidermidis (strain ATCC 35984 / DSM 28319 / BCRC 17069 / CCUG 31568 / BM 3577 / RP62A).